The following is a 162-amino-acid chain: Anaerobic nitrite reductase NSHB2 (162 aa).

One can recognise a Globin domain in the interval Ser16–Lys159. Residues Glu49–Ser53 carry the Homodimerization motif. Ser59, Lys73, His77, Arg100, Thr104, and His105 together coordinate heme b. The short motif at Asp112–Glu124 is the Homodimerization element.

It belongs to the plant globin family. In terms of assembly, homodimer. It depends on heme b as a cofactor. Mainly expressed in germinating seeds, seedlings, roots, flowers and leaves.

Its subcellular location is the cytoplasm. It is found in the nucleus. The enzyme catalyses Fe(III)-heme b-[protein] + nitric oxide + H2O = Fe(II)-heme b-[protein] + nitrite + 2 H(+). Functionally, phytoglobin that reduces nitrite to nitric oxide under anoxic conditions (e.g. during flooding or in waterlogged soil). May not function as an oxygen storage or transport protein. Has an unusually high affinity for O(2) through an hexacoordinate heme iron because of a very low dissociation constant. Promotes tolerance to low potassium K(+) conditions. The chain is Anaerobic nitrite reductase NSHB2 from Oryza sativa subsp. indica (Rice).